The chain runs to 190 residues: NADH-quinone oxidoreductase subunit B (190 aa).

Cysteine 69, cysteine 70, cysteine 134, and cysteine 164 together coordinate [4Fe-4S] cluster.

This sequence belongs to the complex I 20 kDa subunit family. NDH-1 is composed of 14 different subunits. Subunits NuoB, C, D, E, F, and G constitute the peripheral sector of the complex. [4Fe-4S] cluster is required as a cofactor.

The protein resides in the cell inner membrane. It carries out the reaction a quinone + NADH + 5 H(+)(in) = a quinol + NAD(+) + 4 H(+)(out). Its function is as follows. NDH-1 shuttles electrons from NADH, via FMN and iron-sulfur (Fe-S) centers, to quinones in the respiratory chain. Couples the redox reaction to proton translocation (for every two electrons transferred, four hydrogen ions are translocated across the cytoplasmic membrane), and thus conserves the redox energy in a proton gradient. This Chelativorans sp. (strain BNC1) protein is NADH-quinone oxidoreductase subunit B.